We begin with the raw amino-acid sequence, 375 residues long: Platelet-derived growth factor receptor-like protein (375 aa).

Residues 1-21 (MKFWLLLGLLLLHEALEDVAG) form the signal peptide. The interval 20–63 (AGQHSPKNKRPKEQGENRIKPTNKKAKPKIPKVKDRDSTDSTAK) is disordered. The segment covering 40 to 50 (PTNKKAKPKIP) has biased composition (basic residues). Positions 47–159 (PKIPKVKDRD…GYICRRDEAK (113 aa)) constitute an Ig-like C2-type 1 domain. A disulfide bridge connects residues cysteine 96 and cysteine 143. N-linked (GlcNAc...) asparagine glycosylation occurs at asparagine 219. Residues 272–375 (PSTTILASSN…TTVATTVEFS (104 aa)) form the Ig-like C2-type 2 domain. Residues cysteine 293 and cysteine 357 are joined by a disulfide bond.

In terms of assembly, forms a complex composed of PDGFRL, TNK2 and GRB2.

Its subcellular location is the secreted. In Mus musculus (Mouse), this protein is Platelet-derived growth factor receptor-like protein (Pdgfrl).